Reading from the N-terminus, the 364-residue chain is Guanine nucleotide-binding protein alpha-8 subunit (364 aa).

G2 carries the N-myristoyl glycine lipid modification. C5 carries the S-palmitoyl cysteine lipid modification. The region spanning K38–Q364 is the G-alpha domain. The G1 motif stretch occupies residues K41–T54. GTP contacts are provided by residues G46–S53, L186–T192, D211–Q215, N280–D283, and A336. Residues S53 and T192 each coordinate Mg(2+). The G2 motif stretch occupies residues D184–T192. Residues F207–R216 are G3 motif. Residues I276–D283 form a G4 motif region. The G5 motif stretch occupies residues T334–T339.

It belongs to the G-alpha family. In terms of assembly, g proteins are composed of 3 units; alpha, beta and gamma. The alpha chain contains the guanine nucleotide binding site.

Functionally, guanine nucleotide-binding proteins (G proteins) are involved as modulators or transducers in various transmembrane signaling systems. This is Guanine nucleotide-binding protein alpha-8 subunit (gpa-8) from Caenorhabditis elegans.